Consider the following 241-residue polypeptide: 3-deoxy-D-manno-octulosonic acid kinase (241 aa).

The active site involves Asp-171.

The protein belongs to the protein kinase superfamily. KdkA/RfaP family.

The protein resides in the cell inner membrane. It catalyses the reaction an alpha-Kdo-(2-&gt;6)-lipid IVA + ATP = a 4-O-phospho-alpha-Kdo-(2-&gt;6)-lipid IVA + ADP + H(+). Its pathway is bacterial outer membrane biogenesis; LPS core biosynthesis. In terms of biological role, catalyzes the ATP-dependent phosphorylation of the 3-deoxy-D-manno-octulosonic acid (Kdo) residue in Kdo-lipid IV(A) at the 4-OH position. This Haemophilus influenzae (strain 86-028NP) protein is 3-deoxy-D-manno-octulosonic acid kinase.